The primary structure comprises 157 residues: uncharacterized protein (157 aa).

The N-terminal stretch at 1–23 (MEALRRAHEATLRLLLCRPWASG) is a signal peptide.

The protein localises to the secreted. This is an uncharacterized protein from Mus musculus (Mouse).